A 181-amino-acid polypeptide reads, in one-letter code: Large ribosomal subunit protein uL5c (181 aa).

The protein belongs to the universal ribosomal protein uL5 family. As to quaternary structure, part of the 50S ribosomal subunit; contacts the 5S rRNA.

It is found in the plastid. The protein localises to the chloroplast. Binds 5S rRNA, forms part of the central protuberance of the 50S subunit. The chain is Large ribosomal subunit protein uL5c (rpl5) from Pyropia yezoensis (Susabi-nori).